We begin with the raw amino-acid sequence, 254 residues long: Ribosomal RNA small subunit methyltransferase A (254 aa).

Asparagine 12, leucine 14, glycine 38, glutamate 59, aspartate 83, and asparagine 100 together coordinate S-adenosyl-L-methionine.

It belongs to the class I-like SAM-binding methyltransferase superfamily. rRNA adenine N(6)-methyltransferase family. RsmA subfamily.

The protein resides in the cytoplasm. It catalyses the reaction adenosine(1518)/adenosine(1519) in 16S rRNA + 4 S-adenosyl-L-methionine = N(6)-dimethyladenosine(1518)/N(6)-dimethyladenosine(1519) in 16S rRNA + 4 S-adenosyl-L-homocysteine + 4 H(+). Functionally, specifically dimethylates two adjacent adenosines (A1518 and A1519) in the loop of a conserved hairpin near the 3'-end of 16S rRNA in the 30S particle. May play a critical role in biogenesis of 30S subunits. This chain is Ribosomal RNA small subunit methyltransferase A, found in Mycoplasma mobile (strain ATCC 43663 / 163K / NCTC 11711) (Mesomycoplasma mobile).